A 675-amino-acid chain; its full sequence is G-protein coupled receptor moody (675 aa).

Residues 1-44 (MSDETTGSLGDAFSPMDTPTTTIMPPPADVDESGFSHSLLTFAA) lie on the Extracellular side of the membrane. A helical transmembrane segment spans residues 45-65 (VMTFLIMIVGICGNLLTVVAL). At 66–73 (LKCPKVRN) the chain is on the cytoplasmic side. Residues 74–94 (VAAAFIISLCIADLLFCALVL) traverse the membrane as a helical segment. Residues 95 to 115 (PFQGLRFVQGTWRHGEVLCRL) lie on the Extracellular side of the membrane. A disulfide bridge links cysteine 113 with cysteine 192. The helical transmembrane segment at 116–136 (IPFIQYGNIGVSLLCIAMITI) threads the bilayer. The Cytoplasmic segment spans residues 137–156 (NRYVMITHYSLYNRIYKRHW). The chain crosses the membrane as a helical span at residues 157–177 (IAIMIAACWLFSYGMQLPTLL). Residues 178-206 (GAWGRFGYDARLQTCSIMSDRHGHSSKTT) are Extracellular-facing. Residues 207-227 (LFITAFVIPCLVIIACYAKIF) form a helical membrane-spanning segment. At 228–327 (WVVHKSEQRL…AKRNEWRITK (100 aa)) the chain is on the cytoplasmic side. Positions 258-316 (TSMPSGDGANPSQVPAGCRVSSDSSSNYSTDVPDTTPGGAGGGAGVKQQPSRVKDQREV) are disordered. Over residues 278-294 (SSDSSSNYSTDVPDTTP) the composition is skewed to low complexity. The chain crosses the membrane as a helical span at residues 328–348 (MVLAIFLSFVICYLPITIVKV). The Extracellular portion of the chain corresponds to 349–359 (ADKDVEHPSLH). The chain crosses the membrane as a helical span at residues 360–380 (IFSYIMLYLSACINPIIYVIM). The Cytoplasmic portion of the chain corresponds to 381–675 (NKQYRKAYKT…LMDKKKFPKD (295 aa)). Disordered stretches follow at residues 475-568 (SKSS…GNGS) and 588-675 (LPPT…FPKD). Positions 536–551 (SSVISANPSSSPSPSS) are enriched in low complexity. Positions 552–565 (SGGGIYRPGIGSMG) are enriched in gly residues. Positions 666–675 (LMDKKKFPKD) are enriched in basic and acidic residues.

It belongs to the G-protein coupled receptor 1 family.

It localises to the cell membrane. Functionally, required in glia to regulate the acute sensitivity to cocaine and to continuously maintain the proper blood-brain barrier (BBB) function. A moody-mediated signaling pathway functions in glia to regulate nervous system insulation and drug-related behaviors. The protein is G-protein coupled receptor moody of Drosophila pseudoobscura pseudoobscura (Fruit fly).